The following is a 104-amino-acid chain: L-rhamnose mutarotase (104 aa).

Tyr18 provides a ligand contact to substrate. His22 serves as the catalytic Proton donor. Residues Tyr41 and 76-77 (WW) each bind substrate.

It belongs to the rhamnose mutarotase family. Homodimer.

Its subcellular location is the cytoplasm. The catalysed reaction is alpha-L-rhamnose = beta-L-rhamnose. Its pathway is carbohydrate metabolism; L-rhamnose metabolism. In terms of biological role, involved in the anomeric conversion of L-rhamnose. This Escherichia coli O17:K52:H18 (strain UMN026 / ExPEC) protein is L-rhamnose mutarotase.